We begin with the raw amino-acid sequence, 511 residues long: Coatomer subunit delta (511 aa).

Positions 168 to 177 are enriched in basic and acidic residues; it reads QARRDAERQG. Positions 168 to 196 are disordered; the sequence is QARRDAERQGKKAPGFGGFGSSTVSGGST. Ser-223 is subject to Phosphoserine. 2 positions are modified to N6-acetyllysine: Lys-233 and Lys-241. The residue at position 244 (Ser-244) is a Phosphoserine. An MHD domain is found at 271–511; the sequence is MESVHMKIEE…TFLVDKYEIL (241 aa). N6-acetyllysine is present on residues Lys-309 and Lys-351. Ser-493 bears the Phosphoserine mark.

The protein belongs to the adaptor complexes medium subunit family. Delta-COP subfamily. Oligomeric complex that consists of at least the alpha, beta, beta', gamma, delta, epsilon and zeta subunits. In terms of tissue distribution, ubiquitously expressed.

The protein resides in the cytoplasm. It is found in the golgi apparatus membrane. Its subcellular location is the cytoplasmic vesicle. It localises to the COPI-coated vesicle membrane. The coatomer is a cytosolic protein complex that binds to dilysine motifs and reversibly associates with Golgi non-clathrin-coated vesicles, which further mediate biosynthetic protein transport from the ER, via the Golgi up to the trans Golgi network. Coatomer complex is required for budding from Golgi membranes, and is essential for the retrograde Golgi-to-ER transport of dilysine-tagged proteins. In mammals, the coatomer can only be recruited by membranes associated to ADP-ribosylation factors (ARFs), which are small GTP-binding proteins; the complex also influences the Golgi structural integrity, as well as the processing, activity, and endocytic recycling of LDL receptors. The sequence is that of Coatomer subunit delta (ARCN1) from Bos taurus (Bovine).